A 267-amino-acid polypeptide reads, in one-letter code: Probable tetrahydroxynaphthalene reductase MYCGRDRAFT_87994 (267 aa).

NADP(+) contacts are provided by Ile-26, Asp-72, Asn-99, and Arg-132. Ser-149 functions as the Proton donor in the catalytic mechanism. Positions 163, 167, 196, and 198 each coordinate NADP(+). Tyr-163 serves as the catalytic Proton acceptor. Lys-167 (lowers pKa of active site Tyr) is an active-site residue.

Belongs to the short-chain dehydrogenases/reductases (SDR) family. Homotetramer.

The catalysed reaction is scytalone + NADP(+) = naphthalene-1,3,6,8-tetrol + NADPH + H(+). Its pathway is pigment biosynthesis; melanin biosynthesis. Functionally, probable tetrahydroxynaphthalene reductase; part of the gene cluster 29 that mediates the biosynthesis dihydroxynaphthalene (DHN)-melanin, a bluish-green pigment and a structural component of the conidial wall. Catalyzes the NADPH-dependent reduction of 1,3,6,8-tetrahydroxynaphthalene (T4HN) into (+)-scytalone. The protein is Probable tetrahydroxynaphthalene reductase MYCGRDRAFT_87994 of Zymoseptoria tritici (strain CBS 115943 / IPO323) (Speckled leaf blotch fungus).